The following is a 183-amino-acid chain: Capsid protein (183 aa).

The interval 136–183 (NAPILSTLPETTVVRRRGRSPRRRTPSPRRRRSQSPRRRRSQSRESQC) is disordered. Basic residues predominate over residues 149-176 (VRRRGRSPRRRTPSPRRRRSQSPRRRRS). S155, S162, and S170 each carry phosphoserine; by host. The 1; half-length repeat unit spans residues 155–161 (SPRRRTP). The segment at 155–177 (SPRRRTPSPRRRRSQSPRRRRSQ) is 3 X 8 AA repeats of S-P-R-R-R-[PR]-S-Q. The Bipartite nuclear localization signal motif lies at 158–175 (RRTPSPRRRRSQSPRRRR). 2 consecutive repeat copies span residues 162–169 (SPRRRRSQ) and 170–177 (SPRRRRSQ). Residues 177–183 (QSRESQC) are RNA binding.

This sequence belongs to the orthohepadnavirus core antigen family. In terms of assembly, homodimerizes, then multimerizes. Interacts with cytosol exposed regions of viral L glycoprotein present in the reticulum-to-Golgi compartment. Interacts with human FLNB. Phosphorylated form interacts with host importin alpha; this interaction depends on the exposure of the NLS, which itself depends upon genome maturation and/or phosphorylation of the capsid protein. Interacts with host NUP153. Phosphorylated by host SRPK1, SRPK2, and maybe protein kinase C or GAPDH. Phosphorylation is critical for pregenomic RNA packaging. Protein kinase C phosphorylation is stimulated by HBx protein and may play a role in transport of the viral genome to the nucleus at the late step during the viral replication cycle.

The protein resides in the virion. Its subcellular location is the host cytoplasm. Self assembles to form an icosahedral capsid. Most capsids appear to be large particles with an icosahedral symmetry of T=4 and consist of 240 copies of capsid protein, though a fraction forms smaller T=3 particles consisting of 180 capsid proteins. Entering capsids are transported along microtubules to the nucleus. Phosphorylation of the capsid is thought to induce exposure of nuclear localization signal in the C-terminal portion of the capsid protein that allows binding to the nuclear pore complex via the importin (karyopherin-) alpha and beta. Capsids are imported in intact form through the nuclear pore into the nuclear basket, where it probably binds NUP153. Only capsids that contain the mature viral genome can release the viral DNA and capsid protein into the nucleoplasm. Immature capsids get stuck in the basket. Capsids encapsulate the pre-genomic RNA and the P protein. Pre-genomic RNA is reverse-transcribed into DNA while the capsid is still in the cytoplasm. The capsid can then either be directed to the nucleus, providing more genomes for transcription, or bud through the endoplasmic reticulum to provide new virions. The sequence is that of Capsid protein from Hepatitis B virus genotype D subtype ayw (isolate France/Tiollais/1979) (HBV-D).